The chain runs to 427 residues: Tyrosine--tRNA ligase (427 aa).

Y39 provides a ligand contact to L-tyrosine. Positions 44 to 53 (PTSDSLHIGH) match the 'HIGH' region motif. L-tyrosine contacts are provided by Y178 and Q182. Residues 238–242 (KFGKT) carry the 'KMSKS' region motif. K241 is a binding site for ATP. In terms of domain architecture, S4 RNA-binding spans 360 to 417 (ITLQQALVESKLVVSRAQARELISSNSITVNSKKQLKTEYIFCATDRLYNRFTLLRRG).

Belongs to the class-I aminoacyl-tRNA synthetase family. TyrS type 1 subfamily. In terms of assembly, homodimer.

The protein localises to the cytoplasm. It catalyses the reaction tRNA(Tyr) + L-tyrosine + ATP = L-tyrosyl-tRNA(Tyr) + AMP + diphosphate + H(+). Catalyzes the attachment of tyrosine to tRNA(Tyr) in a two-step reaction: tyrosine is first activated by ATP to form Tyr-AMP and then transferred to the acceptor end of tRNA(Tyr). This is Tyrosine--tRNA ligase from Blochmanniella pennsylvanica (strain BPEN).